The chain runs to 169 residues: Protein-export protein SecB (169 aa).

The protein belongs to the SecB family. In terms of assembly, homotetramer, a dimer of dimers. One homotetramer interacts with 1 SecA dimer.

It localises to the cytoplasm. Its function is as follows. One of the proteins required for the normal export of preproteins out of the cell cytoplasm. It is a molecular chaperone that binds to a subset of precursor proteins, maintaining them in a translocation-competent state. It also specifically binds to its receptor SecA. This is Protein-export protein SecB from Mannheimia succiniciproducens (strain KCTC 0769BP / MBEL55E).